A 228-amino-acid chain; its full sequence is Ribulose-phosphate 3-epimerase (228 aa).

A substrate-binding site is contributed by Ser9. A divalent metal cation-binding residues include His34, Asp36, His68, and Asp177. Residue Asp36 is the Proton acceptor of the active site. Substrate contacts are provided by residues His68, 177 to 179 (DGG), and 199 to 200 (GS). The Proton donor role is filled by Asp177.

The protein belongs to the ribulose-phosphate 3-epimerase family. The cofactor is a divalent metal cation.

It catalyses the reaction D-ribulose 5-phosphate = D-xylulose 5-phosphate. Its pathway is carbohydrate degradation. Functionally, catalyzes the reversible epimerization of D-ribulose 5-phosphate to D-xylulose 5-phosphate. This is Ribulose-phosphate 3-epimerase from Buchnera aphidicola subsp. Acyrthosiphon pisum (strain APS) (Acyrthosiphon pisum symbiotic bacterium).